The chain runs to 581 residues: Phosphoinositide phospholipase C 2 (581 aa).

Residues 26–102 (EIKTIFEKYS…NPPLALHKVH (77 aa)) enclose the EF-hand-like domain. The region spanning 103–248 (HDMDAPISHY…LKRRIIISTK (146 aa)) is the PI-PLC X-box domain. Catalysis depends on residues histidine 118 and histidine 164. Residues 279–314 (PSFIQRNKSEAKDDLDGNDDDDDDDDEDKSKINAPP) are disordered. Positions 294 to 305 (DGNDDDDDDDDE) are enriched in acidic residues. The PI-PLC Y-box domain occupies 317–433 (KHLIAIHAGK…GYIKKPDLLL (117 aa)). In terms of domain architecture, C2 spans 434 to 563 (KSGSDSDIFD…EGIRAFPLHS (130 aa)).

Ca(2+) serves as cofactor. Post-translationally, phosphorylation level varies significantly during early response to bacterial elicitor. Expressed in roots, shoots, leaves and flowers.

It is found in the cell membrane. The catalysed reaction is a 1,2-diacyl-sn-glycero-3-phospho-(1D-myo-inositol-4,5-bisphosphate) + H2O = 1D-myo-inositol 1,4,5-trisphosphate + a 1,2-diacyl-sn-glycerol + H(+). Its function is as follows. The production of the second messenger molecules diacylglycerol (DAG) and inositol 1,4,5-trisphosphate (IP3) is mediated by activated phosphatidylinositol-specific phospholipase C enzymes. At physiological calcium concentration, the preferred substrate is phosphatidylinositol 4,5-bisphosphate versus phosphatidylinositol. This is Phosphoinositide phospholipase C 2 (PLC2) from Arabidopsis thaliana (Mouse-ear cress).